We begin with the raw amino-acid sequence, 427 residues long: Cryptic catabolic NAD-specific glutamate dehydrogenase GudB (427 aa).

Substrate contacts are provided by K80 and K107. Catalysis depends on K119, which acts as the Proton donor. Positions 203 and 234 each coordinate NAD(+). S361 contributes to the substrate binding site.

It belongs to the Glu/Leu/Phe/Val dehydrogenases family. In terms of assembly, homohexamer.

It catalyses the reaction L-glutamate + NAD(+) + H2O = 2-oxoglutarate + NH4(+) + NADH + H(+). Functionally, gudB seems to be intrinsically inactive, however spontaneous mutations removing a 9-bp direct repeat within the wild-type gudB sequence activated the GudB protein and allowed more-efficient utilization of amino acids of the glutamate family (called gutB1). This 3 amino acid insertion presumably causes severe destabilization of the fold of the protein, leading to an inactive enzyme that is very quickly degraded. The cryptic GudB serves as a buffer that may compensate for mutations in the rocG gene and that can also be decryptified for the utilization of glutamate as a single carbon source in the absence of arginine. It is unable to synthesize glutamate. The chain is Cryptic catabolic NAD-specific glutamate dehydrogenase GudB from Bacillus subtilis (strain 168).